Reading from the N-terminus, the 620-residue chain is Translocator protein BipB (620 aa).

Positions 58–95 (QCDAQPAAHDARLDDKPALRAPQERDAPPLGASDTGSR) are disordered. The span at 66–84 (HDARLDDKPALRAPQERDA) shows a compositional bias: basic and acidic residues. The stretch at 309–339 (EMQAKREAELQKKSDEYQAQVKKAEEMQKTM) forms a coiled coil. The next 3 membrane-spanning stretches (helical) occupy residues 355 to 375 (FAAA…GLAL), 401 to 421 (AILK…LVAC), and 430 to 450 (LAGA…AAFV).

This sequence belongs to the SctE/SipB/YopB family.

The protein localises to the secreted. Its subcellular location is the host membrane. In terms of biological role, plays a role in the bacterium-induced formation of multinucleated giant cell (MNGC), which is formed after host cell fusion, as well as in the intercellular spreading of bacteria and in the induction of apoptosis in macrophages. May act in concert with other effector proteins to induce fusion of host cell membranes. This is Translocator protein BipB (bipB) from Burkholderia pseudomallei (strain 1106a).